Here is a 291-residue protein sequence, read N- to C-terminus: 3-hydroxy-5-phosphonooxypentane-2,4-dione thiolase (291 aa).

Residue Lys-203 is the Schiff-base intermediate with substrate of the active site.

It belongs to the DeoC/FbaB aldolase family. As to quaternary structure, homodecamer.

Its subcellular location is the cytoplasm. It catalyses the reaction dihydroxyacetone phosphate + acetyl-CoA = 3-hydroxy-2,4-dioxopentyl phosphate + CoA. In terms of biological role, involved in the degradation of phospho-AI-2, thereby terminating induction of the lsr operon and closing the AI-2 signaling cycle. Catalyzes the transfer of an acetyl moiety from 3-hydroxy-5-phosphonooxypentane-2,4-dione to CoA to form glycerone phosphate and acetyl-CoA. The sequence is that of 3-hydroxy-5-phosphonooxypentane-2,4-dione thiolase from Salmonella paratyphi A (strain ATCC 9150 / SARB42).